A 333-amino-acid polypeptide reads, in one-letter code: Glycerol-3-phosphate dehydrogenase [NAD(P)+] 2 (333 aa).

4 residues coordinate NADPH: S12, W13, R32, and K106. Sn-glycerol 3-phosphate contacts are provided by K106 and G134. Position 138 (A138) interacts with NADPH. Positions 189, 242, 252, 253, and 254 each coordinate sn-glycerol 3-phosphate. The Proton acceptor role is filled by K189. R253 lines the NADPH pocket. NADPH contacts are provided by V277 and E279.

Belongs to the NAD-dependent glycerol-3-phosphate dehydrogenase family.

It is found in the cytoplasm. The catalysed reaction is sn-glycerol 3-phosphate + NAD(+) = dihydroxyacetone phosphate + NADH + H(+). It carries out the reaction sn-glycerol 3-phosphate + NADP(+) = dihydroxyacetone phosphate + NADPH + H(+). It participates in membrane lipid metabolism; glycerophospholipid metabolism. Catalyzes the reduction of the glycolytic intermediate dihydroxyacetone phosphate (DHAP) to sn-glycerol 3-phosphate (G3P), the key precursor for phospholipid synthesis. The polypeptide is Glycerol-3-phosphate dehydrogenase [NAD(P)+] 2 (Sphingopyxis alaskensis (strain DSM 13593 / LMG 18877 / RB2256) (Sphingomonas alaskensis)).